We begin with the raw amino-acid sequence, 504 residues long: Putative arrestin-related trafficking adapter SPBC839.02 (504 aa).

Residues 481-504 (QAPPPKYDDIFQSGSSHDENHDDN) are disordered.

It belongs to the ALY1 family.

Its function is as follows. May regulate endocytosis in response to extracellular stimuli. The chain is Putative arrestin-related trafficking adapter SPBC839.02 from Schizosaccharomyces pombe (strain 972 / ATCC 24843) (Fission yeast).